A 505-amino-acid polypeptide reads, in one-letter code: Ribose import ATP-binding protein RbsA (505 aa).

ABC transporter domains follow at residues 12–249 (LQMK…VGRK) and 259–504 (VKKG…VAFS). 44–51 (GENGAGKS) lines the ATP pocket.

Belongs to the ABC transporter superfamily. Ribose importer (TC 3.A.1.2.1) family. The complex is composed of an ATP-binding protein (RbsA), two transmembrane proteins (RbsC) and a solute-binding protein (RbsB).

The protein localises to the cell membrane. It carries out the reaction D-ribose(out) + ATP + H2O = D-ribose(in) + ADP + phosphate + H(+). Functionally, part of the ABC transporter complex RbsABC involved in ribose import. Responsible for energy coupling to the transport system. In Clostridium tetani (strain Massachusetts / E88), this protein is Ribose import ATP-binding protein RbsA.